The sequence spans 258 residues: Glucose 1-dehydrogenase 2 (258 aa).

11-35 (IVTGSSKGIGKAIAERFGKEKMNVV) serves as a coordination point for NADP(+). S146 lines the substrate pocket. Catalysis depends on Y159, which acts as the Proton acceptor.

This sequence belongs to the short-chain dehydrogenases/reductases (SDR) family. In terms of assembly, homotetramer.

The enzyme catalyses D-glucose + NAD(+) = D-glucono-1,5-lactone + NADH + H(+). It carries out the reaction D-glucose + NADP(+) = D-glucono-1,5-lactone + NADPH + H(+). This is Glucose 1-dehydrogenase 2 (ycdF) from Bacillus subtilis (strain 168).